We begin with the raw amino-acid sequence, 636 residues long: DNA mismatch repair protein MutL (636 aa).

Positions 341 to 420 are disordered; sequence APLINKPEQQ…PGAEEYTPEA (80 aa). Over residues 348–358 the composition is skewed to basic and acidic residues; sequence EQQKLDFDQVR.

This sequence belongs to the DNA mismatch repair MutL/HexB family.

Its function is as follows. This protein is involved in the repair of mismatches in DNA. It is required for dam-dependent methyl-directed DNA mismatch repair. May act as a 'molecular matchmaker', a protein that promotes the formation of a stable complex between two or more DNA-binding proteins in an ATP-dependent manner without itself being part of a final effector complex. In Bacillus licheniformis (strain ATCC 14580 / DSM 13 / JCM 2505 / CCUG 7422 / NBRC 12200 / NCIMB 9375 / NCTC 10341 / NRRL NRS-1264 / Gibson 46), this protein is DNA mismatch repair protein MutL.